A 1315-amino-acid polypeptide reads, in one-letter code: Chaoptin (1315 aa).

The signal sequence occupies residues 1–29 (MGLEFFFKFGYAFLTITLMIMIWMSLARA). N-linked (GlcNAc...) (high mannose) asparagine; alternate glycosylation occurs at N77. N77 carries N-linked (GlcNAc...) (paucimannose) asparagine; alternate glycosylation. LRR repeat units follow at residues 80 to 101 (KVFM…FLQS), 103 to 124 (GMYR…AFTG), 128 to 149 (SLWE…SLRH), 152 to 173 (KLRH…SFRG), 177 to 198 (SLQT…SFSG), 201 to 222 (ILET…VFVD), 226 to 247 (RLTR…ALGP), 250 to 271 (SLRT…ETYE), and 279 to 300 (NLDN…SFKY). A glycan (N-linked (GlcNAc...) (paucimannose) asparagine; alternate) is linked at N267. N267 is a glycosylation site (N-linked (GlcNAc...) (complex) asparagine; alternate). A glycan (N-linked (GlcNAc...) (high mannose) asparagine; alternate) is linked at N305. A glycan (N-linked (GlcNAc...) (paucimannose) asparagine; alternate) is linked at N305. LRR repeat units follow at residues 326–347 (RIRE…AFDS), 351–372 (SLQI…LFNN), 375–396 (VLRV…ETFN), 401–424 (TLLK…RNMT), 477–498 (GLKR…AFHE), 527–548 (SLQE…SFHF), 551–572 (NLRL…TFQG), 577–598 (KLEE…TFFD), 601–622 (ALRK…AFMN), 625–646 (ELEY…SFQN), 649–670 (KLEI…YFDQ), 676–696 (NLNV…SSWS), 708–729 (NIKI…YFRP), 733–754 (SLTH…VFGN), 757–778 (HLQW…AFKN), 781–802 (QLQL…IFKP), 805–826 (GLRI…LFYN), 828–849 (GMEK…SLSS), 854–875 (TLCE…DLSN), 879–900 (SLRY…VFAT), 903–924 (KLAV…SFMG), 928–948 (SLIK…IRLK), 949–970 (YLRE…LAHN), 973–994 (NLRM…TQAL), 996–1017 (HLRR…SFDG), 1021–1044 (DLEM…DSLP), and 1045–1066 (HLRS…PHLL). N361 is a glycosylation site (N-linked (GlcNAc...) (high mannose) asparagine). Residue N422 is glycosylated (N-linked (GlcNAc...) asparagine). N680 carries N-linked (GlcNAc...) (high mannose) asparagine glycosylation. The N-linked (GlcNAc...) (high mannose) asparagine; alternate glycan is linked to N692. N-linked (GlcNAc...) (paucimannose) asparagine; alternate glycosylation is present at N692. N-linked (GlcNAc...) (high mannose) asparagine glycosylation is present at N718. N-linked (GlcNAc...) asparagine glycosylation occurs at N746. An N-linked (GlcNAc...) (high mannose) asparagine glycan is attached at N936. N970 carries N-linked (GlcNAc...) (paucimannose) asparagine glycosylation. N-linked (GlcNAc...) (complex) asparagine glycosylation is present at N1012. Residues N1122, N1152, and N1171 are each glycosylated (N-linked (GlcNAc...) (high mannose) asparagine). The LRRCT domain maps to 1211–1274 (TDLNCDCDLG…DDLRETRCEN (64 aa)).

It belongs to the chaoptin family. As to expression, expressed in photoreceptor cells and their axons in the adult retina, the ocellus and larval photoreceptor organ.

It is found in the cell membrane. Functionally, required for photoreceptor cell morphogenesis. Mediates homophilic cellular adhesion. The polypeptide is Chaoptin (chp) (Drosophila melanogaster (Fruit fly)).